A 465-amino-acid chain; its full sequence is ATP-dependent protease ATPase subunit HslU (465 aa).

ATP is bound by residues Val20, 62 to 67 (GVGKTE), Asp277, Glu343, and Arg415.

It belongs to the ClpX chaperone family. HslU subfamily. In terms of assembly, a double ring-shaped homohexamer of HslV is capped on each side by a ring-shaped HslU homohexamer. The assembly of the HslU/HslV complex is dependent on binding of ATP.

Its subcellular location is the cytoplasm. ATPase subunit of a proteasome-like degradation complex; this subunit has chaperone activity. The binding of ATP and its subsequent hydrolysis by HslU are essential for unfolding of protein substrates subsequently hydrolyzed by HslV. HslU recognizes the N-terminal part of its protein substrates and unfolds these before they are guided to HslV for hydrolysis. The chain is ATP-dependent protease ATPase subunit HslU from Geobacillus kaustophilus (strain HTA426).